The sequence spans 401 residues: Phosphoglycerate kinase (401 aa).

Substrate-binding positions include 20-22 (DFN), Arg-35, 58-61 (HLGR), Arg-117, and Arg-154. Residues Lys-204, Gly-298, Glu-329, and 358–361 (GGDS) each bind ATP.

The protein belongs to the phosphoglycerate kinase family. In terms of assembly, monomer.

Its subcellular location is the cytoplasm. The catalysed reaction is (2R)-3-phosphoglycerate + ATP = (2R)-3-phospho-glyceroyl phosphate + ADP. The protein operates within carbohydrate degradation; glycolysis; pyruvate from D-glyceraldehyde 3-phosphate: step 2/5. The chain is Phosphoglycerate kinase from Bifidobacterium adolescentis (strain ATCC 15703 / DSM 20083 / NCTC 11814 / E194a).